We begin with the raw amino-acid sequence, 357 residues long: Adenylate isopentenyltransferase 1, chloroplastic (357 aa).

A chloroplast-targeting transit peptide spans 1–71 (MTELNFHLLP…NRKDKVVVIL (71 aa)). Residues 20 to 39 (TTTSPSFSSHSSSSSSLLSF) are compositionally biased toward low complexity. The disordered stretch occupies residues 20 to 58 (TTTSPSFSSHSSSSSSLLSFTKRRRKHQPLVSSIRMEQS). 72–79 (GATGAGKS) contributes to the ATP binding site.

The protein belongs to the IPP transferase family. In terms of tissue distribution, expressed in the vascular stele of the roots, in the xylem precursor cell files in the root tip, in leaf axils, ovules, and immature seeds.

It is found in the plastid. It localises to the chloroplast. It catalyses the reaction dimethylallyl diphosphate + AMP = N(6)-(dimethylallyl)adenosine 5'-phosphate + diphosphate. The enzyme catalyses dimethylallyl diphosphate + ADP = N(6)-(dimethylallyl)adenosine 5'-diphosphate + diphosphate. It carries out the reaction dimethylallyl diphosphate + ATP = N(6)-(dimethylallyl)adenosine 5'-triphosphate + diphosphate. Its function is as follows. Involved in cytokinin biosynthesis. Catalyzes the transfer of an isopentenyl group from dimethylallyl diphosphate (DMAPP) to ATP, ADP and AMP. Adenine, adenosine, isopentenylpyrophosphate and 1-hydroxy-2-methyl-2-(E)-butenyl 4-diphosphate (HMBDP) are not used as substrates. This is Adenylate isopentenyltransferase 1, chloroplastic (IPT1) from Arabidopsis thaliana (Mouse-ear cress).